The following is a 341-amino-acid chain: GTPase Obg (341 aa).

The region spanning 1–159 is the Obg domain; that stretch reads MKFVDEALIK…RNLRLELRVL (159 aa). Residues 128-150 form a disordered region; sequence TRYKSSVNRSPRQTTPGSPGESR. A compositionally biased stretch (polar residues) spans 129–144; that stretch reads RYKSSVNRSPRQTTPG. The region spanning 160-334 is the OBG-type G domain; the sequence is ADVGLLGLPN…LCYALMQLID (175 aa). Residues 166–173, 191–195, 213–216, 283–286, and 315–317 contribute to the GTP site; these read GLPNAGKS, FTTLH, DIPG, NKID, and SAI. Ser-173 and Thr-193 together coordinate Mg(2+).

It belongs to the TRAFAC class OBG-HflX-like GTPase superfamily. OBG GTPase family. Monomer. The cofactor is Mg(2+).

It localises to the cytoplasm. An essential GTPase which binds GTP, GDP and possibly (p)ppGpp with moderate affinity, with high nucleotide exchange rates and a fairly low GTP hydrolysis rate. Plays a role in control of the cell cycle, stress response, ribosome biogenesis and in those bacteria that undergo differentiation, in morphogenesis control. This Legionella pneumophila subsp. pneumophila (strain Philadelphia 1 / ATCC 33152 / DSM 7513) protein is GTPase Obg.